We begin with the raw amino-acid sequence, 293 residues long: Homoserine kinase (293 aa).

ATP is bound at residue 83–93; it reads RPKSGLGSSGA.

The protein belongs to the GHMP kinase family. Homoserine kinase subfamily.

The protein localises to the cytoplasm. It carries out the reaction L-homoserine + ATP = O-phospho-L-homoserine + ADP + H(+). It functions in the pathway amino-acid biosynthesis; L-threonine biosynthesis; L-threonine from L-aspartate: step 4/5. Its function is as follows. Catalyzes the ATP-dependent phosphorylation of L-homoserine to L-homoserine phosphate. The polypeptide is Homoserine kinase (Pyrococcus horikoshii (strain ATCC 700860 / DSM 12428 / JCM 9974 / NBRC 100139 / OT-3)).